Here is a 519-residue protein sequence, read N- to C-terminus: Chaperone SurA (519 aa).

The first 31 residues, 1 to 31, serve as a signal peptide directing secretion; it reads MMRSLHSLRRMSGTVLALMLAAGLPLSAAQA. 2 stretches are compositionally biased toward low complexity: residues 31-45 and 197-207; these read AQPA…QKPA and PAAAQATRAPA. Disordered regions lie at residues 31–50 and 196–221; these read AQPA…PAPS and NPAA…PAQS. Residues 223–324 form the PpiC 1 domain; that stretch reads PAMLVLAQIL…NGFHILKVVD (102 aa). Residues 328–361 are disordered; it reads GGQPAQAARPAPAPAPQQPSSFQEGPSVAAPQGP. A PpiC 2 domain is found at 364 to 463; that stretch reads VTQTHARHIL…FGWHLIQVLE (100 aa).

The protein resides in the periplasm. It catalyses the reaction [protein]-peptidylproline (omega=180) = [protein]-peptidylproline (omega=0). Chaperone involved in the correct folding and assembly of outer membrane proteins. Recognizes specific patterns of aromatic residues and the orientation of their side chains, which are found more frequently in integral outer membrane proteins. May act in both early periplasmic and late outer membrane-associated steps of protein maturation. The protein is Chaperone SurA of Bordetella bronchiseptica (strain ATCC BAA-588 / NCTC 13252 / RB50) (Alcaligenes bronchisepticus).